Reading from the N-terminus, the 180-residue chain is Small ribosomal subunit protein bS18 (180 aa).

2 disordered regions span residues 1–26 (MKNKLKKKKNPKGTKKIKAKAKAHKV) and 53–82 (YSDKESYSDKESYSDKESYSDKESYSDKES).

It belongs to the bacterial ribosomal protein bS18 family. Part of the 30S ribosomal subunit. Forms a tight heterodimer with protein bS6.

Binds as a heterodimer with protein bS6 to the central domain of the 16S rRNA, where it helps stabilize the platform of the 30S subunit. The polypeptide is Small ribosomal subunit protein bS18 (Karelsulcia muelleri (strain GWSS) (Sulcia muelleri)).